The following is a 328-amino-acid chain: GMP reductase (328 aa).

Cysteine 176 functions as the Thioimidate intermediate in the catalytic mechanism. Residue 205–228 (IIADGGIRTHGDIAKSIRFGASMI) coordinates NADP(+).

It belongs to the IMPDH/GMPR family. GuaC type 2 subfamily.

It carries out the reaction IMP + NH4(+) + NADP(+) = GMP + NADPH + 2 H(+). Its function is as follows. Catalyzes the irreversible NADPH-dependent deamination of GMP to IMP. It functions in the conversion of nucleobase, nucleoside and nucleotide derivatives of G to A nucleotides, and in maintaining the intracellular balance of A and G nucleotides. The chain is GMP reductase from Streptococcus pneumoniae (strain P1031).